Reading from the N-terminus, the 883-residue chain is Integrator complex subunit 6-A (883 aa).

Residues 3-227 (ILLFLLDTSA…QCLESLVQKV (225 aa)) form the VWFA domain. An Inhibitory loop motif is present at residues 626–633 (MMIDEADE).

It belongs to the Integrator subunit 6 family. As to quaternary structure, component of the Integrator complex, composed of core subunits INTS1, INTS2, INTS3, INTS4, INTS5, INTS6, INTS7, INTS8, INTS9/RC74, INTS10, INTS11/CPSF3L, INTS12, INTS13, INTS14 and INTS15. The core complex associates with protein phosphatase 2A subunits PPP2CA and PPP2R1A, to form the Integrator-PP2A (INTAC) complex.

It localises to the nucleus. The protein localises to the chromosome. Its function is as follows. Component of the integrator complex, a multiprotein complex that terminates RNA polymerase II (Pol II) transcription in the promoter-proximal region of genes. The integrator complex provides a quality checkpoint during transcription elongation by driving premature transcription termination of transcripts that are unfavorably configured for transcriptional elongation: the complex terminates transcription by (1) catalyzing dephosphorylation of the C-terminal domain (CTD) of Pol II subunit POLR2A/RPB1 and SUPT5H/SPT5, (2) degrading the exiting nascent RNA transcript via endonuclease activity and (3) promoting the release of Pol II from bound DNA. The integrator complex is also involved in terminating the synthesis of non-coding Pol II transcripts, such as enhancer RNAs (eRNAs), small nuclear RNAs (snRNAs), telomerase RNAs and long non-coding RNAs (lncRNAs). Within the integrator complex, INTS6 acts as a molecular adapter that promotes assembly of protein phosphatase 2A (PP2A) subunits to the integrator core complex, promoting recruitment of PP2A to transcription pause-release checkpoint. The polypeptide is Integrator complex subunit 6-A (ints6-a) (Xenopus laevis (African clawed frog)).